The sequence spans 132 residues: Agouti-signaling protein (132 aa).

The first 22 residues, 1–22, serve as a signal peptide directing secretion; it reads MDVTRLLLATLLVFLCFFTAYS. A glycan (N-linked (GlcNAc...) asparagine) is linked at asparagine 39. Positions 60–88 are disordered; sequence KQISRKEAEKKRSSKKEASMKKVARPRTP. Residues 63-79 are compositionally biased toward basic and acidic residues; it reads SRKEAEKKRSSKKEASM. 5 disulfide bridges follow: cysteine 93–cysteine 108, cysteine 100–cysteine 114, cysteine 107–cysteine 125, cysteine 111–cysteine 132, and cysteine 116–cysteine 123. Positions 93 to 132 constitute an Agouti domain; the sequence is CVATRDSCKPPAPACCDPCASCQCRFFRSACSCRVLSLNC.

It localises to the secreted. Its function is as follows. Involved in the regulation of melanogenesis. The binding of ASP to MC1R precludes alpha-MSH initiated signaling and thus blocks production of cAMP, leading to a down-regulation of eumelanogenesis (brown/black pigment) and thus increasing synthesis of pheomelanin (yellow/red pigment). The polypeptide is Agouti-signaling protein (ASIP) (Macaca cyclopis (Taiwan macaque)).